The chain runs to 336 residues: 4-hydroxy-3-methylbut-2-enyl diphosphate reductase (336 aa).

Positions 1–23 are disordered; it reads MFGQRLDTLGAMSSSVSSPSPET. [4Fe-4S] cluster is bound at residue Cys-36. Positions 65 and 98 each coordinate (2E)-4-hydroxy-3-methylbut-2-enyl diphosphate. Positions 65 and 98 each coordinate dimethylallyl diphosphate. His-65 and His-98 together coordinate isopentenyl diphosphate. Cys-120 contributes to the [4Fe-4S] cluster binding site. Residue His-148 coordinates (2E)-4-hydroxy-3-methylbut-2-enyl diphosphate. His-148 is a dimethylallyl diphosphate binding site. Residue His-148 coordinates isopentenyl diphosphate. Glu-150 serves as the catalytic Proton donor. A (2E)-4-hydroxy-3-methylbut-2-enyl diphosphate-binding site is contributed by Thr-190. [4Fe-4S] cluster is bound at residue Cys-220. Residues Ser-248, Ser-249, Asn-250, and Ser-293 each contribute to the (2E)-4-hydroxy-3-methylbut-2-enyl diphosphate site. Dimethylallyl diphosphate contacts are provided by Ser-248, Ser-249, Asn-250, and Ser-293. Isopentenyl diphosphate is bound by residues Ser-248, Ser-249, Asn-250, and Ser-293.

The protein belongs to the IspH family. [4Fe-4S] cluster is required as a cofactor.

It carries out the reaction isopentenyl diphosphate + 2 oxidized [2Fe-2S]-[ferredoxin] + H2O = (2E)-4-hydroxy-3-methylbut-2-enyl diphosphate + 2 reduced [2Fe-2S]-[ferredoxin] + 2 H(+). The enzyme catalyses dimethylallyl diphosphate + 2 oxidized [2Fe-2S]-[ferredoxin] + H2O = (2E)-4-hydroxy-3-methylbut-2-enyl diphosphate + 2 reduced [2Fe-2S]-[ferredoxin] + 2 H(+). It participates in isoprenoid biosynthesis; dimethylallyl diphosphate biosynthesis; dimethylallyl diphosphate from (2E)-4-hydroxy-3-methylbutenyl diphosphate: step 1/1. It functions in the pathway isoprenoid biosynthesis; isopentenyl diphosphate biosynthesis via DXP pathway; isopentenyl diphosphate from 1-deoxy-D-xylulose 5-phosphate: step 6/6. In terms of biological role, catalyzes the conversion of 1-hydroxy-2-methyl-2-(E)-butenyl 4-diphosphate (HMBPP) into a mixture of isopentenyl diphosphate (IPP) and dimethylallyl diphosphate (DMAPP). Acts in the terminal step of the DOXP/MEP pathway for isoprenoid precursor biosynthesis. The protein is 4-hydroxy-3-methylbut-2-enyl diphosphate reductase of Corynebacterium efficiens (strain DSM 44549 / YS-314 / AJ 12310 / JCM 11189 / NBRC 100395).